Consider the following 328-residue polypeptide: D-cysteine desulfhydrase (328 aa).

Lys51 bears the N6-(pyridoxal phosphate)lysine mark.

It belongs to the ACC deaminase/D-cysteine desulfhydrase family. Homodimer. Pyridoxal 5'-phosphate is required as a cofactor.

The catalysed reaction is D-cysteine + H2O = hydrogen sulfide + pyruvate + NH4(+) + H(+). Functionally, catalyzes the alpha,beta-elimination reaction of D-cysteine and of several D-cysteine derivatives. It could be a defense mechanism against D-cysteine. This chain is D-cysteine desulfhydrase, found in Escherichia coli (strain SMS-3-5 / SECEC).